The sequence spans 62 residues: UPF0291 protein CLB_2550 (62 aa).

The protein belongs to the UPF0291 family.

The protein localises to the cytoplasm. This is UPF0291 protein CLB_2550 from Clostridium botulinum (strain ATCC 19397 / Type A).